A 1000-amino-acid chain; its full sequence is Putative methyl-accepting chemotaxis protein sll0041 (1000 aa).

The disordered stretch occupies residues 1–59 (MTQNPSSDRRPDTAQSVANGETLDGALFTGLTDTAAAQDESSETSASFATIDGEDKSEV). GAF domains follow at residues 342–478 (EIQG…QTTL) and 509–650 (NSEQ…GLAL). Residues 671 to 722 (EKMQKRALELLMEVDPVSRGDLTIRAHVTEDEIGTIADSYNATIESLRRIVT) enclose the HAMP domain. The Methyl-accepting transducer domain occupies 727 to 963 (AASQFTETTD…SVTQTMALVA (237 aa)).

The protein belongs to the methyl-accepting chemotaxis (MCP) protein family.

The chain is Putative methyl-accepting chemotaxis protein sll0041 from Synechocystis sp. (strain ATCC 27184 / PCC 6803 / Kazusa).